Here is a 607-residue protein sequence, read N- to C-terminus: Pescadillo homolog (607 aa).

Positions 320–413 (KLKNLFKGLK…KLLPVNKYLI (94 aa)) constitute a BRCT domain. The tract at residues 486 to 607 (EALNSGALEE…KTQRKEILAK (122 aa)) is disordered. A compositionally biased stretch (acidic residues) spans 495-511 (EAPEEEDDDEEAPEEDE). Residues 530–549 (IFKENPSEQKKLTKQEEALR) show a composition bias toward basic and acidic residues. Basic residues predominate over residues 551-562 (RMVKSRHKKLYR). A compositionally biased stretch (basic and acidic residues) spans 563-607 (KMLEKQKKQTKEANLLKEKRQQIDKKQRVEQTQKRKTQRKEILAK).

Belongs to the pescadillo family.

The protein localises to the nucleus. The protein resides in the nucleolus. It is found in the nucleoplasm. Its function is as follows. Required for maturation of ribosomal RNAs and formation of the large ribosomal subunit. The sequence is that of Pescadillo homolog from Culex quinquefasciatus (Southern house mosquito).